The sequence spans 264 residues: Neurexophilin-2 (264 aa).

The signal sequence occupies residues 1–22; that stretch reads MRLRPLPLVVVPGLLQLLFCDS. Residues 23-90 form an II region; the sequence is EKVVHATEGL…WDWLANITEV (68 aa). N-linked (GlcNAc...) asparagine glycosylation is found at asparagine 86, asparagine 139, asparagine 149, and asparagine 155. The segment at 91 to 169 is III; it reads QEPLARTKRR…LVPPSKVVEF (79 aa). Residues 170-178 are IV (linker domain); it reads EVSPQSTLE. Positions 179–264 are v (Cys-rich); that stretch reads TKESKSFNCR…HSETPYLSSG (86 aa).

Belongs to the neurexophilin family. May be proteolytically processed at the boundary between the N-terminal non-conserved and the central conserved domain in neuron-like cells. Brain, only in a scattered subpopulation of neurons that probably represent inhibitory interneurons.

It is found in the secreted. Functionally, may be signaling molecules that resemble neuropeptides and that act by binding to alpha-neurexins and possibly other receptors. The protein is Neurexophilin-2 (NXPH2) of Bos taurus (Bovine).